Consider the following 148-residue polypeptide: Transcriptional regulator MraZ (148 aa).

SpoVT-AbrB domains follow at residues 7-56 (KERH…EPDI) and 85-128 (LDVV…APER).

Belongs to the MraZ family. As to quaternary structure, forms oligomers.

It localises to the cytoplasm. The protein resides in the nucleoid. This chain is Transcriptional regulator MraZ, found in Chlorobium phaeobacteroides (strain DSM 266 / SMG 266 / 2430).